The following is a 590-amino-acid chain: MSAILSADDLNDFISPGVACIKPVESLPQKQSNENPYEVTTEDKVQPENPPPAQISLTDCLACSGCVTSAEAVLISLQSHNEVLNTLDAQPEIRLVSGENGTVIEDSGRTRDEGRIFVASVSPQVRASLAATYGVSEKEANHIIHQFLSGPNGLRAGGKHGSGFSWVVDTNSLREAVLVLTADEVSESLTGSSAPKRPILSSACPGWICYAEKTHPFILPHLSRLKSPQALTGTFLKTVISKKLGVPASRIWHLSIMPCFDKKLEASREELTDAAWNRLSSGEPNTPVRDVDCVITSRELLSLASSRGISLPNLPRKSLPQSLRLPFPDPALNVFLFSEKSFSRQTSASGTSGGYLHNVLLSFQARNPGSEIVTQRGRNADVVDYTLMSPEGEPILKAARYYGFRNIQNLVRKLKPARVSRLPGAKVATGQTAGGRRQPISRNGASAGSSMDYAYVEVMACPGGCTNGGGQIRIGDAREFNAQHDASVTSETSKPLPHEQRSWLARVDEAYYSADSDMDDAVEDVRTVSVTDNEDRVHKTLQHWSAITDIPLEKLAYTTYREVESDVGKPSAPNDTSRVVELAGKIGGGW.

Cys-20 is a binding site for [4Fe-4S] cluster. Residues 25-50 (ESLPQKQSNENPYEVTTEDKVQPENP) are disordered. 5 residues coordinate [4Fe-4S] cluster: Cys-60, Cys-63, Cys-66, Cys-204, and Cys-259. A disordered region spans residues 423–446 (PGAKVATGQTAGGRRQPISRNGAS). [4Fe-4S] cluster-binding residues include Cys-461 and Cys-465.

Belongs to the NARF family.

Functionally, component of the cytosolic Fe/S protein assembly machinery. Required for maturation of extramitochondrial Fe/S proteins. May play a role in the transfer of pre-assembled Fe/S clusters to target apoproteins. This is Cytosolic Fe-S cluster assembly factor nar1 (nar1) from Emericella nidulans (strain FGSC A4 / ATCC 38163 / CBS 112.46 / NRRL 194 / M139) (Aspergillus nidulans).